The sequence spans 298 residues: Acetylglutamate kinase (298 aa).

Substrate-binding positions include 69 to 70, R91, and N196; that span reads GG.

This sequence belongs to the acetylglutamate kinase family. ArgB subfamily.

Its subcellular location is the cytoplasm. The catalysed reaction is N-acetyl-L-glutamate + ATP = N-acetyl-L-glutamyl 5-phosphate + ADP. It participates in amino-acid biosynthesis; L-arginine biosynthesis; N(2)-acetyl-L-ornithine from L-glutamate: step 2/4. Its function is as follows. Catalyzes the ATP-dependent phosphorylation of N-acetyl-L-glutamate. The polypeptide is Acetylglutamate kinase (Rhodopseudomonas palustris (strain BisB5)).